The chain runs to 65 residues: Small ribosomal subunit protein bS21 (65 aa).

Residues 39–65 form a disordered region; the sequence is EKPSIKRKKKAIAARKRALKKQRKMMD. The span at 43 to 65 shows a compositional bias: basic residues; it reads IKRKKKAIAARKRALKKQRKMMD.

It belongs to the bacterial ribosomal protein bS21 family.

This chain is Small ribosomal subunit protein bS21, found in Pelobacter propionicus (strain DSM 2379 / NBRC 103807 / OttBd1).